Consider the following 330-residue polypeptide: NmrA-like family domain-containing oxidoreductase notO (330 aa).

Residues 12-17, 38-42, 59-60, 80-82, and 160-163 each bind NADP(+); these read VGIGSL, HHFAQ, RS, IEA, and LGGG. A helical transmembrane segment spans residues 12–32; the sequence is VGIGSLPAGLVALFMGATSGI. The interaction with ASS1 stretch occupies residues 158–202; that stretch reads SVLGGGLESPLNEQDLDLRDPKNWTFWSSSMHSGTMGTLTLERIA. N180 and N207 each carry an N-linked (GlcNAc...) asparagine glycan.

It belongs to the NmrA-type oxidoreductase family.

The protein resides in the membrane. NmrA-like family domain-containing oxidoreductase; part of the gene cluster that mediates the biosynthesis of notoamide, a fungal indole alkaloid that belongs to a family of natural products containing a characteristic bicyclo[2.2.2]diazaoctane core. The first step of notoamide biosynthesis involves coupling of L-proline and L-tryptophan by the bimodular NRPS notE, to produce cyclo-L-tryptophan-L-proline called brevianamide F. The reverse prenyltransferase notF then acts as a deoxybrevianamide E synthase and converts brevianamide F to deoxybrevianamide E via reverse prenylation at C-2 of the indole ring leading to the bicyclo[2.2.2]diazaoctane core. Deoxybrevianamide E is further hydroxylated at C-6 of the indole ring, likely catalyzed by the cytochrome P450 monooxygenase notG, to yield 6-hydroxy-deoxybrevianamide E. 6-hydroxy-deoxybrevianamide E is a specific substrate of the prenyltransferase notC for normal prenylation at C-7 to produce 6-hydroxy-7-prenyl-deoxybrevianamide, also called notoamide S. As the proposed pivotal branching point in notoamide biosynthesis, notoamide S can be diverted to notoamide E through an oxidative pyran ring closure putatively catalyzed by either notH cytochrome P450 monooxygenase or the notD FAD-linked oxidoreductase. This step would be followed by an indole 2,3-epoxidation-initiated pinacol-like rearrangement catalyzed by the notB FAD-dependent monooxygenase leading to the formation of notoamide C and notoamide D. On the other hand notoamide S is converted to notoamide T by notH (or notD), a bifunctional oxidase that also functions as the intramolecular Diels-Alderase responsible for generation of (+)-notoamide T. To generate antipodal (-)-notoaminide T, notH' (or notD') in Aspergillus versicolor is expected to catalyze a Diels-Alder reaction leading to the opposite stereochemistry. The remaining oxidoreductase notD (or notH) likely catalyzes the oxidative pyran ring formation to yield (+)-stephacidin A. The FAD-dependent monooxygenase notI is highly similar to notB and is predicted to catalyze a similar conversion from (+)-stephacidin A to (-)-notoamide B via the 2,3-epoxidation of (+)-stephacidin A followed by a pinacol-type rearrangement. Finally, it remains unclear which enzyme could be responsible for the final hydroxylation steps leading to notoamide A and sclerotiamide. The function of notO in the notoamide biosynthesis has not been determined yet. In Aspergillus sp. (strain MF297-2), this protein is NmrA-like family domain-containing oxidoreductase notO.